Here is a 147-residue protein sequence, read N- to C-terminus: Peptide methionine sulfoxide reductase MsrB (147 aa).

Positions K8 to K131 constitute a MsrB domain. C120 functions as the Nucleophile in the catalytic mechanism.

It belongs to the MsrB Met sulfoxide reductase family.

It catalyses the reaction L-methionyl-[protein] + [thioredoxin]-disulfide + H2O = L-methionyl-(R)-S-oxide-[protein] + [thioredoxin]-dithiol. The sequence is that of Peptide methionine sulfoxide reductase MsrB from Clostridium perfringens (strain SM101 / Type A).